The chain runs to 155 residues: MLHRNPDEFLKSIPKDKRIMCLDMGEKQIGIAFSDKTQLIATAHSIYHRKNMSKDLGYLHRIFKENESGSMVIGLPLKMDEQETKWCKTIIQFANKIIKKYKVNIYLQDESFSTSIATHTLKITGISITKSKKIDDKISACIILQRTLDKINTIK.

Belongs to the YqgF nuclease family.

The protein resides in the cytoplasm. Its function is as follows. Could be a nuclease involved in processing of the 5'-end of pre-16S rRNA. The polypeptide is Putative pre-16S rRNA nuclease (Wolbachia pipientis wMel).